The following is a 264-amino-acid chain: MKQYKDLCRHVLENGEKKGDRTGTGTISTFGYQMRFNLQGGFPMLTTKKLHFKSIAHELLWFLKGDTNVRYLQENGVRIWNEWADENGELGPVYGSQWRSWRGADGETIDQISRLIHDIKTNPNSRRLIVSAWNVGEIDRMALPPCHCLFQFYVADGKLSCQLYQRSADVFLGVPFNIASYALLTMMIAHVTGLEPGEFVHTFGDVHIYQNHVEQVNLQLTRDVRPLPKLRFARNVDSIFDFAFEDFIIEDYDPHPHIKGAVSV.

Position 21 (R21) interacts with dUMP. Residue H51 participates in (6R)-5,10-methylene-5,6,7,8-tetrahydrofolate binding. 126–127 (RR) is a binding site for dUMP. C146 functions as the Nucleophile in the catalytic mechanism. DUMP contacts are provided by residues 166–169 (RSAD), N177, and 207–209 (HIY). D169 contributes to the (6R)-5,10-methylene-5,6,7,8-tetrahydrofolate binding site. (6R)-5,10-methylene-5,6,7,8-tetrahydrofolate is bound at residue S263.

This sequence belongs to the thymidylate synthase family. Bacterial-type ThyA subfamily. Homodimer.

It localises to the cytoplasm. The catalysed reaction is dUMP + (6R)-5,10-methylene-5,6,7,8-tetrahydrofolate = 7,8-dihydrofolate + dTMP. It functions in the pathway pyrimidine metabolism; dTTP biosynthesis. In terms of biological role, catalyzes the reductive methylation of 2'-deoxyuridine-5'-monophosphate (dUMP) to 2'-deoxythymidine-5'-monophosphate (dTMP) while utilizing 5,10-methylenetetrahydrofolate (mTHF) as the methyl donor and reductant in the reaction, yielding dihydrofolate (DHF) as a by-product. This enzymatic reaction provides an intracellular de novo source of dTMP, an essential precursor for DNA biosynthesis. The polypeptide is Thymidylate synthase 2 (Bacillus amyloliquefaciens (Bacillus velezensis)).